The chain runs to 195 residues: 4'-phosphopantetheinyl transferase AcpT (195 aa).

Belongs to the P-Pant transferase superfamily. Gsp/Sfp/HetI/AcpT family.

It carries out the reaction apo-[ACP] + CoA = holo-[ACP] + adenosine 3',5'-bisphosphate + H(+). May be involved in an alternative pathway for phosphopantetheinyl transfer and holo-ACP synthesis in E.coli. The native apo-protein substrate is unknown. Is able to functionally replace AcpS in vivo but only when expressed at high levels. This chain is 4'-phosphopantetheinyl transferase AcpT, found in Escherichia coli (strain K12).